The primary structure comprises 318 residues: uncharacterized protein (318 aa).

The segment at 19 to 63 (VPPDARHHEPRPGMTDHPDTGNGIGLTGRPPRAIPDPAPRSSHGP) is disordered. The segment covering 21–37 (PDARHHEPRPGMTDHPD) has biased composition (basic and acidic residues). 72–79 (QKGGVGKT) contacts ATP.

This sequence belongs to the ParA family.

Its function is as follows. May play a role in septum formation. This is an uncharacterized protein from Mycobacterium tuberculosis (strain CDC 1551 / Oshkosh).